The primary structure comprises 735 residues: Protein STRUBBELIG-RECEPTOR FAMILY 2 (735 aa).

Positions 1–23 (MKTKQQLRFLATILLTTILFVLA) are cleaved as a signal peptide. The Extracellular segment spans residues 24–297 (KTDTDPLEVL…KKKKKGIGAG (274 aa)). LRR repeat units follow at residues 78-94 (LRELKLLGSLGNQLQHL), 96-119 (NLKILDVSFNNLEGEIPFGLPPNA), 120-140 (THINMAYNNLTQSIPFSLPLM), 142-163 (SLQSLNLSHNSLSGPLGNVFSG), 165-187 (QIKEMDLSFNNLTGDLPSSFGTL), 189-211 (NLTSLYLQNNRLTGSVIYLADLP), 212-232 (LADLNIEDNQFSGIIPSHFQS), and 233-253 (IPHLWIWGNKFHVEPNYKPWK). 5 N-linked (GlcNAc...) asparagine glycosylation sites follow: N118, N128, N147, N175, and N189. The N-linked (GlcNAc...) asparagine glycan is linked to N264. A helical transmembrane segment spans residues 298–318 (STFLLVGGLALLGTFFALFAV). The Cytoplasmic portion of the chain corresponds to 319-735 (RMNHRRAQNL…SSPTFSYLSS (417 aa)). Positions 358-378 (PQIKRFQPPPAPQLRHLPSPP) are disordered. A Protein kinase domain is found at 415 to 695 (FSEENLLGEG…EIVEALTALI (281 aa)).

Belongs to the protein kinase superfamily. Ser/Thr protein kinase family. In terms of tissue distribution, expressed in seedlings, roots, stems, leaves, flowers and siliques.

Its subcellular location is the membrane. The chain is Protein STRUBBELIG-RECEPTOR FAMILY 2 (SRF2) from Arabidopsis thaliana (Mouse-ear cress).